We begin with the raw amino-acid sequence, 324 residues long: mRNA decay activator protein ZFP36 (324 aa).

The segment at 1-15 (MDLAAIYKSLLSLSP) is necessary for nuclear export. The necessary and sufficient for the association with mRNA decay enzymes and mRNA decay activation stretch occupies residues 1-98 (MDLAAIYKSL…PTSPTATPTT (98 aa)). 2 necessary for localization of ARE-containing mRNAs to processing bodies (PBs) regions span residues 1–172 (MDLA…DLAA) and 98–324 (TSSR…SVSE). Over residues 15-46 (PELPSDLGETESSTSWASSGPWSLSSSDSSLP) the composition is skewed to low complexity. The disordered stretch occupies residues 15 to 50 (PELPSDLGETESSTSWASSGPWSLSSSDSSLPEVAA). Serine 58 carries the post-translational modification Phosphoserine; by MAPKAPK2. Position 64 is a phosphoserine (serine 64). One copy of the P-P-P-P-G repeat lies at 69-73 (PPPPG). Residues 76–100 (PLAPRPSSDWSPSPTSPTATPTTSS) form a disordered region. Residues serine 86 and serine 88 each carry the phosphoserine modification. Threonine 90 is subject to Phosphothreonine. Residue serine 91 is modified to Phosphoserine. Residues 93–166 (TATPTTSSRY…GSRCHFIHNP (74 aa)) form a necessary for nuclear localization region. Residues 95-171 (TPTTSSRYKT…FIHNPSEDLA (77 aa)) form a necessary for RNA-binding region. C3H1-type zinc fingers lie at residues 101–129 (RYKT…HGLG) and 139–167 (KYKT…HNPS). The segment at 101–192 (RYKTELCRTF…ISFSGLPSGR (92 aa)) is necessary for interaction with PABPN1. Serine 167 carries the phosphoserine modification. The segment at 172–324 (APGHPHVLRQ…PIFNRISVSE (153 aa)) is necessary for mRNA decay activation. Serine 184 carries the phosphoserine; by MAPKAPK2 modification. Disordered stretches follow at residues 185 to 227 (FSGL…LLLS) and 270 to 324 (PSAH…SVSE). Serine 195 is modified (phosphoserine). Residues 196–200 (PPPAS) form a P-P-P-P-G repeat. A compositionally biased stretch (low complexity) spans 204–214 (PSVSSWSFSPS). At serine 216 the chain carries Phosphoserine. The P-P-P-P-G repeat unit spans residues 218–222 (PPPPG). Residue serine 227 is modified to Phosphoserine; by MAPK1; in vitro. Phosphoserine occurs at positions 274, 294, and 321. The interval 310-324 (APRRLPIFNRISVSE) is interaction with CNOT1.

Associates with cytoplasmic CCR4-NOT and PAN2-PAN3 deadenylase complexes to trigger ARE-containing mRNA deadenylation and decay processes. Part of a mRNA decay activation complex at least composed of poly(A)-specific exoribonucleases CNOT6, EXOSC2 and XRN1 and mRNA-decapping enzymes DCP1A and DCP2. Associates with the RNA exosome complex. Interacts (via phosphorylated form) with 14-3-3 proteins; these interactions promote exclusion of ZFP36 from cytoplasmic stress granules in response to arsenite treatment in a MAPKAPK2-dependent manner and does not prevent CCR4-NOT deadenylase complex recruitment or ZFP36-induced ARE-containing mRNA deadenylation and decay processes. Interacts with 14-3-3 proteins; these interactions occur in response to rapamycin in an Akt-dependent manner. Interacts with AGO2 and AGO4. Interacts (via C-terminus) with CNOT1; this interaction occurs in a RNA-independent manner and induces mRNA deadenylation. Interacts (via N-terminus) with CNOT6. Interacts with CNOT6L. Interacts (via C-terminus) with CNOT7; this interaction occurs in a RNA-independent manner, induces mRNA deadenylation and is inhibited in a phosphorylation MAPKAPK2-dependent manner. Interacts (via unphosphorylated form) with CNOT8; this interaction occurs in a RNA-independent manner and is inhibited in a phosphorylation MAPKAPK2-dependent manner. Interacts with DCP1A. Interacts (via N-terminus) with DCP2. Interacts with EDC3. Interacts (via N-terminus) with EXOSC2. Interacts with heat shock 70 kDa proteins. Interacts with KHSRP; this interaction increases upon cytokine-induced treatment. Interacts with MAP3K4; this interaction enhances the association with SH3KBP1/CIN85. Interacts with MAPKAPK2; this interaction occurs upon skeletal muscle satellite cell activation. Interacts with NCL. Interacts with NUP214; this interaction increases upon lipopolysaccharide (LPS) stimulation. Interacts with PABPC1; this interaction occurs in a RNA-dependent manner. Interacts (via hypophosphorylated form) with PABPN1 (via RRM domain and C-terminal arginine-rich region); this interaction occurs in the nucleus in a RNA-independent manner, decreases in presence of single-stranded poly(A) RNA-oligomer and in a p38 MAPK-dependent-manner and inhibits nuclear poly(A) tail synthesis. Interacts with PAN2. Interacts (via C3H1-type zinc finger domains) with PKM. Interacts (via C3H1-type zinc finger domains) with nuclear RNA poly(A) polymerase. Interacts with PPP2CA; this interaction occurs in LPS-stimulated cells and induces ZFP36 dephosphorylation, and hence may promote ARE-containing mRNAs decay. Interacts (via C-terminus) with PRR5L (via C-terminus); this interaction may accelerate ZFP36-mediated mRNA decay during stress. Interacts (via C-terminus) with SFN; this interaction occurs in a phosphorylation-dependent manner. Interacts (via extreme C-terminal region) with SH3KBP1/CIN85 (via SH3 domains); this interaction enhances MAP3K4-induced phosphorylation of ZFP36 at Ser-64 and Ser-91 and does not alter neither ZFP36 binding to ARE-containing transcripts nor TNF-alpha mRNA decay. Interacts with XRN1. Interacts (via C-terminus and Ser-184 phosphorylated form) with YWHAB; this interaction occurs in a p38/MAPKAPK2-dependent manner, increases cytoplasmic localization of ZFP36 and protects ZFP36 from Ser-184 dephosphorylation by serine/threonine phosphatase 2A, and hence may be crucial for stabilizing ARE-containing mRNAs. Interacts (via phosphorylated form) with YWHAE. Interacts (via C-terminus) with YWHAG; this interaction occurs in a phosphorylation-dependent manner. Interacts with YWHAH; this interaction occurs in a phosphorylation-dependent manner. Interacts with YWHAQ; this interaction occurs in a phosphorylation-dependent manner. Interacts with (via C-terminus) YWHAZ; this interaction occurs in a phosphorylation-dependent manner. Does not interact with SH3KBP1. Interacts (via P-P-P-P-G repeats) with GIGYF2; the interaction is direct. Phosphorylated. Phosphorylation at serine and/or threonine residues occurs in a p38 MAPK- and MAPKAPK2-dependent manner. Phosphorylated by MAPKAPK2 at Ser-58 and Ser-184; phosphorylation increases its stability and cytoplasmic localization, promotes binding to 14-3-3 adapter proteins and inhibits the recruitment of cytoplasmic CCR4-NOT and PAN2-PAN3 deadenylase complexes to the mRNA decay machinery, thereby inhibiting ZFP36-induced ARE-containing mRNA deadenylation and decay processes. Phosphorylation by MAPKAPK2 does not impair ARE-containing RNA-binding. Phosphorylated in a MAPKAPK2- and p38 MAPK-dependent manner upon skeletal muscle satellite cell activation; this phosphorylation inhibits ZFP36-mediated mRNA decay activity, and hence stabilizes MYOD1 mRNA. Phosphorylated by MAPK1 upon mitogen stimulation. Phosphorylated at Ser-64 and Ser-91; these phosphorylations increase in a SH3KBP1-dependent manner. Phosphorylated at serine and threonine residues in a pyruvate kinase PKM- and p38 MAPK-dependent manner. Phosphorylation at Ser-58 may participate in the PKM-mediated degradation of ZFP36 in a p38 MAPK-dependent manner. Dephosphorylated by serine/threonine phosphatase 2A at Ser-184. In terms of processing, ubiquitinated; pyruvate kinase (PKM)-dependent ubiquitination leads to proteasomal degradation through a p38 MAPK signaling pathway.

The protein resides in the nucleus. The protein localises to the cytoplasm. It localises to the cytoplasmic granule. It is found in the P-body. Its function is as follows. Zinc-finger RNA-binding protein that destabilizes numerous cytoplasmic AU-rich element (ARE)-containing mRNA transcripts by promoting their poly(A) tail removal or deadenylation, and hence provide a mechanism for attenuating protein synthesis. Acts as an 3'-untranslated region (UTR) ARE mRNA-binding adapter protein to communicate signaling events to the mRNA decay machinery. Recruits deadenylase CNOT7 (and probably the CCR4-NOT complex) via association with CNOT1, and hence promotes ARE-mediated mRNA deadenylation. Also functions by recruiting components of the cytoplasmic RNA decay machinery to the bound ARE-containing mRNAs. Self regulates by destabilizing its own mRNA. Binds to 3'-UTR ARE of numerous mRNAs. Also binds to ARE of its own mRNA. Plays a role in anti-inflammatory responses; suppresses tumor necrosis factor (TNF)-alpha production by stimulating ARE-mediated TNF-alpha mRNA decay and several other inflammatory ARE-containing mRNAs in interferon (IFN)- and/or lipopolysaccharide (LPS)-induced macrophages. Also plays a role in the regulation of dendritic cell maturation at the post-transcriptional level, and hence operates as part of a negative feedback loop to limit the inflammatory response. Promotes ARE-mediated mRNA decay of hypoxia-inducible factor HIF1A mRNA during the response of endothelial cells to hypoxia. Positively regulates early adipogenesis of preadipocytes by promoting ARE-mediated mRNA decay of immediate early genes (IEGs). Negatively regulates hematopoietic/erythroid cell differentiation by promoting ARE-mediated mRNA decay of the transcription factor STAT5B mRNA. Plays a role in maintaining skeletal muscle satellite cell quiescence by promoting ARE-mediated mRNA decay of the myogenic determination factor MYOD1 mRNA. Also associates with and regulates the expression of non-ARE-containing target mRNAs at the post-transcriptional level, such as MHC class I mRNAs. Participates in association with argonaute RISC catalytic components in the ARE-mediated mRNA decay mechanism; assists microRNA (miRNA) targeting ARE-containing mRNAs. May also play a role in the regulation of cytoplasmic mRNA decapping; enhances decapping of ARE-containing RNAs, in vitro. Involved in the delivery of target ARE-mRNAs to processing bodies (PBs). In addition to its cytosolic mRNA-decay function, affects nuclear pre-mRNA processing. Negatively regulates nuclear poly(A)-binding protein PABPN1-stimulated polyadenylation activity on ARE-containing pre-mRNA during LPS-stimulated macrophages. Also involved in the regulation of stress granule (SG) and P-body (PB) formation and fusion. Plays a role in the regulation of keratinocyte proliferation, differentiation and apoptosis. Plays a role as a tumor suppressor by inhibiting cell proliferation in breast cancer cells. The protein is mRNA decay activator protein ZFP36 of Bos taurus (Bovine).